The sequence spans 36 residues: Phospholipase A2 hemilipin-2 (36 aa).

This sequence belongs to the phospholipase A2 family. Group III subfamily. As to quaternary structure, heterodimer composed of a small subunit and a large subunit; disulfid-linked. Requires Ca(2+) as cofactor. In terms of tissue distribution, expressed by the venom gland.

Its subcellular location is the secreted. The catalysed reaction is a 1,2-diacyl-sn-glycero-3-phosphocholine + H2O = a 1-acyl-sn-glycero-3-phosphocholine + a fatty acid + H(+). Its function is as follows. Scorpion venom phospholipase A2 (PLA2) that impacts angiogenesis in vitro and in vivo without showing any cytotoxic or apoptotic signs. The antiangiogenic effect is independent from the catalytic activity and seems to be held by its small subunit. PLA2 catalyzes the calcium-dependent hydrolysis of the 2-acyl groups in 3-sn-phosphoglycerides. The chain is Phospholipase A2 hemilipin-2 from Hemiscorpius lepturus (Scorpion).